The following is a 356-amino-acid chain: Probable dual-specificity RNA methyltransferase RlmN (356 aa).

Catalysis depends on Glu100, which acts as the Proton acceptor. One can recognise a Radical SAM core domain in the interval 106–340 (TNSRLTTCVS…VSLRASRGLD (235 aa)). An intrachain disulfide couples Cys113 to Cys345. [4Fe-4S] cluster-binding residues include Cys120, Cys124, and Cys127. S-adenosyl-L-methionine is bound by residues 167–168 (GE), Ser197, 226–228 (SLH), and Asn302. Cys345 functions as the S-methylcysteine intermediate in the catalytic mechanism.

Belongs to the radical SAM superfamily. RlmN family. [4Fe-4S] cluster serves as cofactor.

Its subcellular location is the cytoplasm. It carries out the reaction adenosine(2503) in 23S rRNA + 2 reduced [2Fe-2S]-[ferredoxin] + 2 S-adenosyl-L-methionine = 2-methyladenosine(2503) in 23S rRNA + 5'-deoxyadenosine + L-methionine + 2 oxidized [2Fe-2S]-[ferredoxin] + S-adenosyl-L-homocysteine. The enzyme catalyses adenosine(37) in tRNA + 2 reduced [2Fe-2S]-[ferredoxin] + 2 S-adenosyl-L-methionine = 2-methyladenosine(37) in tRNA + 5'-deoxyadenosine + L-methionine + 2 oxidized [2Fe-2S]-[ferredoxin] + S-adenosyl-L-homocysteine. Specifically methylates position 2 of adenine 2503 in 23S rRNA and position 2 of adenine 37 in tRNAs. The sequence is that of Probable dual-specificity RNA methyltransferase RlmN from Prochlorococcus marinus (strain MIT 9211).